A 256-amino-acid chain; its full sequence is 5-keto-4-deoxy-D-glucarate aldolase (256 aa).

H50 acts as the Proton acceptor in catalysis. Substrate is bound at residue Q151. E153 is a binding site for Mg(2+). Substrate is bound by residues S178 and D179. Mg(2+) is bound at residue D179.

It belongs to the HpcH/HpaI aldolase family. KDGluc aldolase subfamily. In terms of assembly, homohexamer; trimer of dimers. Mg(2+) serves as cofactor.

It carries out the reaction 5-dehydro-4-deoxy-D-glucarate = 2-hydroxy-3-oxopropanoate + pyruvate. The enzyme catalyses 2-dehydro-3-deoxy-D-glucarate = 2-hydroxy-3-oxopropanoate + pyruvate. It functions in the pathway carbohydrate acid metabolism; galactarate degradation; D-glycerate from galactarate: step 2/3. In terms of biological role, catalyzes the reversible retro-aldol cleavage of both 5-keto-4-deoxy-D-glucarate and 2-keto-3-deoxy-D-glucarate to pyruvate and tartronic semialdehyde. The chain is 5-keto-4-deoxy-D-glucarate aldolase from Salmonella agona (strain SL483).